A 679-amino-acid polypeptide reads, in one-letter code: G-protein-signaling modulator 2 (679 aa).

Positions 22–357 (ASCLELALEG…HLEISREVGD (336 aa)) are important for interaction with NUMA1; INSC and FRMPD1. TPR repeat units follow at residues 24–57 (CLEL…GTED), 62–95 (SAIY…ARTI), 102–135 (AKAS…SREL), 142–184 (ARAL…AVDL), 202–235 (GRAF…AKEF), 242–275 (RRAY…ARQL), 282–315 (AQSC…AQEL), and 322–355 (GRAC…SREV). 2 positions are modified to phosphoserine: S408 and S484. T487 carries the phosphothreonine modification. One can recognise a GoLoco 1 domain in the interval 490 to 512 (DEGFFDLLRRFQSNRMDDQRCHL). 2 positions are modified to phosphoserine: S540 and S564. 3 GoLoco domains span residues 543 to 565 (TDEF…RASF), 594 to 616 (DEDF…RCAP), and 628 to 650 (DEDF…RVLL). R608, R613, R642, and R647 together coordinate GDP.

This sequence belongs to the GPSM family. Interacts with the dynein-dynactin complex; this interaction is inhibited in a PLK1-dependent manner. Part of a spindle orientation complex at least composed of GNAI1, GPSM2 and NUMA1. Interacts with LLGL2. Interacts (via TPR repeat region) with INSC/inscuteable. Interacts (via TPR repeat region) with NUMA1 (via C-terminus); this interaction is direct, inhibited in a PLK1-dependent manner and promotes spindle pole organization. INSC and NUMA1 compete for the same binding site, but INSC has higher affinity and can displace NUMA1 (in vitro). Interacts with GNAI2. Interacts (via GoLoco domains) with the GDP-bound form of GNAI1 and GNAI3; has much lower affinity for the GTP-bound form. Interaction with GDP-bound GNAI3 strongly enhances the affinity for NUMA1. Interacts (via TPR repeat region) with FRMPD1. INSC and FRMPD1 compete for the same binding site, but INSC has higher affinity and can displace FRMPD1 (in vitro). Interacts (via TPR repeat region) with FRMPD4. Identified in a complex with INSC and F2RL2/Par3. Interacts with TASOR. Detected in brain and liver (at protein level). Detected in brain, spleen, liver and testis, and at lower levels in heart, lung and kidney. Enriched in the ventricular zone of the developing central nervous systems. Expressed in proximal colon, ileum, ovary, Sertoli cells of the testis and granular cells within the cerebellum.

The protein localises to the cytoplasm. It is found in the cell cortex. The protein resides in the cytoskeleton. It localises to the spindle pole. Its subcellular location is the lateral cell membrane. Plays an important role in mitotic spindle pole organization via its interaction with NUMA1. Required for cortical dynein-dynactin complex recruitment during metaphase. Plays a role in metaphase spindle orientation. Plays an important role in asymmetric cell divisions. Has guanine nucleotide dissociation inhibitor (GDI) activity towards G(i) alpha proteins, such as GNAI1 and GNAI3, and thereby regulates their activity. In Mus musculus (Mouse), this protein is G-protein-signaling modulator 2 (Gpsm2).